A 197-amino-acid chain; its full sequence is Holliday junction branch migration complex subunit RuvA (197 aa).

The tract at residues 1–63 is domain I; it reads MFEYLNGKLV…EDAHSLYGFV (63 aa). Residues 64 to 142 are domain II; sequence NEAEKALFLR…ATGTVGISLL (79 aa). The interval 142–146 is flexible linker; sequence LDAGP. The tract at residues 147–197 is domain III; that stretch reads AGNLALEEAIEALQALGYKATELKKIEKKLAQETGLTSEEYIKSALKLMMK.

The protein belongs to the RuvA family. In terms of assembly, homotetramer. Forms an RuvA(8)-RuvB(12)-Holliday junction (HJ) complex. HJ DNA is sandwiched between 2 RuvA tetramers; dsDNA enters through RuvA and exits via RuvB. An RuvB hexamer assembles on each DNA strand where it exits the tetramer. Each RuvB hexamer is contacted by two RuvA subunits (via domain III) on 2 adjacent RuvB subunits; this complex drives branch migration. In the full resolvosome a probable DNA-RuvA(4)-RuvB(12)-RuvC(2) complex forms which resolves the HJ.

Its subcellular location is the cytoplasm. The RuvA-RuvB-RuvC complex processes Holliday junction (HJ) DNA during genetic recombination and DNA repair, while the RuvA-RuvB complex plays an important role in the rescue of blocked DNA replication forks via replication fork reversal (RFR). RuvA specifically binds to HJ cruciform DNA, conferring on it an open structure. The RuvB hexamer acts as an ATP-dependent pump, pulling dsDNA into and through the RuvAB complex. HJ branch migration allows RuvC to scan DNA until it finds its consensus sequence, where it cleaves and resolves the cruciform DNA. The protein is Holliday junction branch migration complex subunit RuvA of Lactococcus lactis subsp. lactis (strain IL1403) (Streptococcus lactis).